The sequence spans 167 residues: U-scoloptoxin-Er5c (167 aa).

A signal peptide spans 1 to 22 (MKTNCEFPLLCLLIVLVANVEG). A propeptide spanning residues 23-94 (EVEDTGLKMV…KRLWRNWERR (72 aa)) is cleaved from the precursor. 3 RLWRNWE repeats span residues 34–40 (RLWRNWE), 61–67 (RLWRNWE), and 86–92 (RLWRNWE). Position 95 is a pyrrolidone carboxylic acid (Gln95). Residues 107-113 (ELWRNWE) form an RLWRNWE 4; approximate repeat. Positions 112–118 (WEDLKRR) are excised as a propeptide. Pyrrolidone carboxylic acid is present on Gln119. One copy of the RLWRNWE 5 repeat lies at 134–140 (RLWRNWE). Positions 139-167 (WEDNHATLRKRSADSLSRQKRLGRERGKE) are excised as a propeptide. Positions 147–167 (RKRSADSLSRQKRLGRERGKE) are disordered.

It belongs to the scoloptoxin-08 family. In terms of tissue distribution, expressed by the venom gland.

It is found in the secreted. This Ethmostigmus rubripes (Giant centipede) protein is U-scoloptoxin-Er5c.